Here is a 45-residue protein sequence, read N- to C-terminus: C-phycocyanin beta subunit (45 aa).

The protein belongs to the phycobiliprotein family. As to quaternary structure, heterodimer of an alpha and a beta subunit. The hererodimer further assembles into trimers and the trimers into hexamers. In terms of processing, contains two covalently linked bilin chromophores.

The protein localises to the cellular thylakoid membrane. In terms of biological role, light-harvesting photosynthetic bile pigment-protein from the phycobiliprotein complex (phycobilisome, PBS). Phycocyanin is the major phycobiliprotein in the PBS rod. The polypeptide is C-phycocyanin beta subunit (cpcB) (Limnospira fusiformis (Arthrospira fusiformis)).